We begin with the raw amino-acid sequence, 700 residues long: Elongation factor G (700 aa).

The region spanning 6-286 (HKVRNIGIMA…AVIDYLPSPL (281 aa)) is the tr-type G domain. GTP-binding positions include 15–22 (AHIDAGKT), 79–83 (DTPGH), and 133–136 (NKMD).

Belongs to the TRAFAC class translation factor GTPase superfamily. Classic translation factor GTPase family. EF-G/EF-2 subfamily.

Its subcellular location is the cytoplasm. Catalyzes the GTP-dependent ribosomal translocation step during translation elongation. During this step, the ribosome changes from the pre-translocational (PRE) to the post-translocational (POST) state as the newly formed A-site-bound peptidyl-tRNA and P-site-bound deacylated tRNA move to the P and E sites, respectively. Catalyzes the coordinated movement of the two tRNA molecules, the mRNA and conformational changes in the ribosome. This is Elongation factor G from Leifsonia xyli subsp. xyli (strain CTCB07).